A 326-amino-acid polypeptide reads, in one-letter code: Putative F-box protein At3g22710 (326 aa).

The F-box domain maps to 1–50 (MTMPDLPPDLVEEILSRVPATSVKKLRSTCTQWNAIFKDERFTEKHFSKA).

This Arabidopsis thaliana (Mouse-ear cress) protein is Putative F-box protein At3g22710.